An 814-amino-acid chain; its full sequence is Protein kintoun (814 aa).

The span at 234 to 246 (AANTARSPASPAP) shows a compositional bias: low complexity. Disordered regions lie at residues 234–259 (AANT…EPRC) and 357–490 (ARQE…MGDP). Basic and acidic residues predominate over residues 388-404 (AAREESADGTGADHGEK). A phosphoserine mark is found at S444 and S618. Residues 654-686 (AGLQGKGKGVREGCPLSEAEAADQSATSPAASD) are disordered. A compositionally biased stretch (low complexity) spans 675–686 (ADQSATSPAASD).

This sequence belongs to the PIH1 family. Kintoun subfamily. Interacts with DNAI2 and HSPA1A. Interacts with CFAP300. Interacts with DNAAF4. Interacts with DNAAF6/PIH1D3. As to expression, expressed in nearly all organs of adult, with higher expression in tissues known to have motile cilia and flagella, such as brain and testis.

The protein localises to the cytoplasm. It localises to the dynein axonemal particle. Required for cytoplasmic pre-assembly of axonemal dyneins, thereby playing a central role in motility in cilia and flagella. Involved in pre-assembly of dynein arm complexes in the cytoplasm before intraflagellar transport loads them for the ciliary compartment. This chain is Protein kintoun, found in Mus musculus (Mouse).